Consider the following 553-residue polypeptide: MTDIEIADQATLEPITEIAEKLGLSEDEIEQYGKYKAKIDLNVKPLPDKKHKLILVTSINPTPAGEGKSTVLIGLGDALNQLNYQTTIAMREPSMGPVFGIKGGATGGGYSQVVPMEDINLNFTGDLHALTSANNTLAALIDNYIMRDNAMNLDPRRIIWKRVEDVNDRALRNVVTGLGGPMAGVPRETGFDITAASELMAILCLSTSLHDLKERISRIVVGYTYDKEPVTVGQLNFQDAITIILKDALKPNLVQTLDHTPTIVHGGPFANIAHGCNSVLATQTALNLSDYTVTEAGFGADLGGEKFLDIKQRVLGKHPDAIVIVATVRALEYNGGAKLADLNEENLDALKKGMANLNRHIKNMQLYGLPIVVAINHFVSDTDKEIQMIKDDCAKQNVEAILTDAWAKGGKGTHDLANKVVELADSPSEFTHIYDVQVDDLQTKLEKIAKQIYGAKEVSFSRKAQNQLKRFAKYGWNDLPVCIAKTQYSFTDDQKQLGAPTDFTFHIRELVPKIGAGFVVALAGNMMTMPGLPKEPAAVNMMIDDNGKITGLF.

62 to 69 contributes to the ATP binding site; sequence TPAGEGKS.

The protein belongs to the formate--tetrahydrofolate ligase family.

It carries out the reaction (6S)-5,6,7,8-tetrahydrofolate + formate + ATP = (6R)-10-formyltetrahydrofolate + ADP + phosphate. The protein operates within one-carbon metabolism; tetrahydrofolate interconversion. This chain is Formate--tetrahydrofolate ligase, found in Limosilactobacillus reuteri subsp. reuteri (strain JCM 1112) (Lactobacillus reuteri).